The chain runs to 454 residues: DNA repair protein RadA (454 aa).

The segment at 11–28 (CTECGTHSPKWLGQCSGC) adopts a C4-type zinc-finger fold. 94–101 (GEPGIGKS) is a binding site for ATP. The RadA KNRFG motif signature appears at 251–255 (KNRFG). Residues 350–454 (DVFLSIAGGL…TIKDAVRLLQ (105 aa)) are lon-protease-like.

It belongs to the RecA family. RadA subfamily.

DNA-dependent ATPase involved in processing of recombination intermediates, plays a role in repairing DNA breaks. Stimulates the branch migration of RecA-mediated strand transfer reactions, allowing the 3' invading strand to extend heteroduplex DNA faster. Binds ssDNA in the presence of ADP but not other nucleotides, has ATPase activity that is stimulated by ssDNA and various branched DNA structures, but inhibited by SSB. Does not have RecA's homology-searching function. This Chlamydia trachomatis serovar D (strain ATCC VR-885 / DSM 19411 / UW-3/Cx) protein is DNA repair protein RadA.